The sequence spans 383 residues: Putative protein FAM157A (383 aa).

Disordered stretches follow at residues 1–21 (MGPL…PLPK) and 177–254 (ATAR…PLGR).

Belongs to the FAM157 family.

The sequence is that of Putative protein FAM157A (FAM157A) from Homo sapiens (Human).